Reading from the N-terminus, the 917-residue chain is Translation initiation factor IF-2 (917 aa).

Residues 102-249 (EKSQAEEQAL…KWTAEPKAPE (148 aa)) show a composition bias toward basic and acidic residues. Positions 102–326 (EKSQAEEQAL…KSSTLQQGFH (225 aa)) are disordered. The segment covering 279–293 (RRGRTAKAPRAKKNN) has biased composition (basic residues). Residues 294–306 (RHSEKADREEARA) are compositionally biased toward basic and acidic residues. In terms of domain architecture, tr-type G spans 416 to 585 (SRAPVVTIMG…LLQAEVLELK (170 aa)). The G1 stretch occupies residues 425–432 (GHVDHGKT). 425–432 (GHVDHGKT) provides a ligand contact to GTP. The G2 stretch occupies residues 450 to 454 (GITQH). A G3 region spans residues 471-474 (DTPG). Residues 471–475 (DTPGH) and 525–528 (NKID) each bind GTP. A G4 region spans residues 525-528 (NKID). The G5 stretch occupies residues 561 to 563 (SAK).

The protein belongs to the TRAFAC class translation factor GTPase superfamily. Classic translation factor GTPase family. IF-2 subfamily.

Its subcellular location is the cytoplasm. In terms of biological role, one of the essential components for the initiation of protein synthesis. Protects formylmethionyl-tRNA from spontaneous hydrolysis and promotes its binding to the 30S ribosomal subunits. Also involved in the hydrolysis of GTP during the formation of the 70S ribosomal complex. This Proteus vulgaris protein is Translation initiation factor IF-2 (infB).